Reading from the N-terminus, the 503-residue chain is Probable cytosol aminopeptidase (503 aa).

The Mn(2+) site is built by Lys270 and Asp275. Lys282 is an active-site residue. Asp293, Asp352, and Glu354 together coordinate Mn(2+). Arg356 is a catalytic residue.

The protein belongs to the peptidase M17 family. It depends on Mn(2+) as a cofactor.

The protein resides in the cytoplasm. The catalysed reaction is Release of an N-terminal amino acid, Xaa-|-Yaa-, in which Xaa is preferably Leu, but may be other amino acids including Pro although not Arg or Lys, and Yaa may be Pro. Amino acid amides and methyl esters are also readily hydrolyzed, but rates on arylamides are exceedingly low.. It catalyses the reaction Release of an N-terminal amino acid, preferentially leucine, but not glutamic or aspartic acids.. In terms of biological role, presumably involved in the processing and regular turnover of intracellular proteins. Catalyzes the removal of unsubstituted N-terminal amino acids from various peptides. The sequence is that of Probable cytosol aminopeptidase from Yersinia enterocolitica serotype O:8 / biotype 1B (strain NCTC 13174 / 8081).